We begin with the raw amino-acid sequence, 426 residues long: Histidine--tRNA ligase (426 aa).

The protein belongs to the class-II aminoacyl-tRNA synthetase family. As to quaternary structure, homodimer.

Its subcellular location is the cytoplasm. It catalyses the reaction tRNA(His) + L-histidine + ATP = L-histidyl-tRNA(His) + AMP + diphosphate + H(+). This is Histidine--tRNA ligase from Streptococcus pyogenes serotype M28 (strain MGAS6180).